Reading from the N-terminus, the 433-residue chain is Steroid hormone receptor ERR2 (433 aa).

The interval 1–38 (MSSDDRHLGSSCGSFIKTEPSSPSSGIDALSHHSPSGS) is disordered. A compositionally biased stretch (low complexity) spans 28 to 38 (DALSHHSPSGS). Residues 93–211 (YMLNAIPKRL…SPPAKKPLTK (119 aa)) form an interaction with NANOG region. The nuclear receptor DNA-binding region spans 100–186 (KRLCLVCGDI…RVRGGRQKYK (87 aa)). 2 consecutive NR C4-type zinc fingers follow at residues 103–123 (CLVC…CEAC) and 139–163 (CPAT…FMKC). The interval 203-433 (PPAKKPLTKI…LFLEMLEAKV (231 aa)) is essential for ESRRB transcriptional activity and interaction with NCOA3. The region spanning 208–432 (PLTKIVSYLL…KLFLEMLEAK (225 aa)) is the NR LBD domain.

This sequence belongs to the nuclear hormone receptor family. NR3 subfamily. In terms of assembly, binds DNA as a monomer. Interacts with NR0B1; represses ESRRB activity at the GATA6 promoter. Interacts with NANOG; reciprocally modulates their transcriptional activities and activates POU5F1 expression. Interacts with NCOA3; mediates the interaction between ESRRB and RNA polymerase II complexes and allows NCOA3 corecruitment to ESRRB, KLF4, NANOG, and SOX2 enhancer regions to trigger ESRRB-dependent gene activation involved in self-renewal and pluripotency. Interacts with KDM1A; co-occupes the core set of ESRRB targets including ELF5 and EOMES. Interacts with the multiprotein complex Integrator, at least composed of INTS1, INTS2, INTS3, INTS4, INTS5, INTS6, INTS7, INTS8, INTS9/RC74, INTS10, INTS11/CPSF3L and INTS12; ESRRB is probably not a core component of the integrator complex and associates to integrator via its interaction with INTS1 and INTS9; attracts the transcriptional machinery. Interacts with JARID2. Interacts with POU5F1; recruits ESRRB near the POU5F1-SOX2 element in the NANOG proximal promoter leading to activation of NANOG expression; the interaction is DNA independent. Interacts with NFE2L2; represses NFE2L2 transcriptional activity. Isoform 1 interacts with ESR1. Post-translationally, acetylated by PCAF/KAT2 (in vitro).

The protein resides in the nucleus. The protein localises to the cytoplasm. It localises to the chromosome. Functionally, transcription factor that binds a canonical ESRRB recognition (ERRE) sequence 5'TCAAGGTCA-3' localized on promoter and enhancer of targets genes regulating their expression or their transcription activity. Plays a role, in a LIF-independent manner, in maintainance of self-renewal and pluripotency of embryonic and trophoblast stem cells through different signaling pathways including FGF signaling pathway and Wnt signaling pathways. Involved in morula development (2-16 cells embryos) by acting as a regulator at the 8-cell stage. Upon FGF signaling pathway activation, interacts with KDM1A by directly binding to enhancer site of ELF5 and EOMES and activating their transcription leading to self-renewal of trophoblast stem cells. Also regulates expression of multiple rod-specific genes and is required for survival of this cell type. Plays a role as transcription factor activator of GATA6, NR0B1, POU5F1 and PERM1. Plays a role as transcription factor repressor of NFE2L2 transcriptional activity and ESR1 transcriptional activity. During mitosis remains bound to a subset of interphase target genes, including pluripotency regulators, through the canonical ESRRB recognition (ERRE) sequence, leading to their transcriptional activation in early G1 phase. Can coassemble on structured DNA elements with other transcription factors like SOX2, POU5F1, KDM1A and NCOA3 to trigger ESRRB-dependent gene activation. This mechanism, in the case of SOX2 corecruitment prevents the embryonic stem cells (ESCs) to epiblast stem cells (EpiSC) transition through positive regulation of NR0B1 that inhibits the EpiSC transcriptional program. Also plays a role inner ear development by controlling expression of ion channels and transporters and in early placentation. In terms of biological role, transcription factor that binds a canonical ESRRB recognition (ERRE) sequence 5'TCAAGGTCA-3' localized on promoter and enhancer of targets genes regulating their expression or their transcription activity. Positively regulates ESR1 transcriptional activity upon E2 stimulation. In Homo sapiens (Human), this protein is Steroid hormone receptor ERR2.